Consider the following 411-residue polypeptide: Citrate synthase (411 aa).

Active-site residues include histidine 304 and aspartate 363.

This sequence belongs to the citrate synthase family.

The enzyme catalyses oxaloacetate + acetyl-CoA + H2O = citrate + CoA + H(+). It functions in the pathway carbohydrate metabolism; tricarboxylic acid cycle; isocitrate from oxaloacetate: step 1/2. In Rickettsia akari, this protein is Citrate synthase (gltA).